The chain runs to 468 residues: ATP synthase subunit beta (468 aa).

155–162 (GGAGVGKT) serves as a coordination point for ATP.

The protein belongs to the ATPase alpha/beta chains family. F-type ATPases have 2 components, CF(1) - the catalytic core - and CF(0) - the membrane proton channel. CF(1) has five subunits: alpha(3), beta(3), gamma(1), delta(1), epsilon(1). CF(0) has three main subunits: a(1), b(2) and c(9-12). The alpha and beta chains form an alternating ring which encloses part of the gamma chain. CF(1) is attached to CF(0) by a central stalk formed by the gamma and epsilon chains, while a peripheral stalk is formed by the delta and b chains.

It is found in the cell membrane. The catalysed reaction is ATP + H2O + 4 H(+)(in) = ADP + phosphate + 5 H(+)(out). In terms of biological role, produces ATP from ADP in the presence of a proton gradient across the membrane. The catalytic sites are hosted primarily by the beta subunits. The chain is ATP synthase subunit beta from Streptococcus pyogenes serotype M5 (strain Manfredo).